Reading from the N-terminus, the 96-residue chain is YcgL domain-containing protein VS_0884 (96 aa).

Positions 1 to 84 constitute a YcgL domain; the sequence is MLCSIYKSSK…PPVNELELHK (84 aa).

The chain is YcgL domain-containing protein VS_0884 from Vibrio atlanticus (strain LGP32) (Vibrio splendidus (strain Mel32)).